The following is a 165-amino-acid chain: MTIEQDLSRIAEQEKALSFDAFDLTTAWQLGKLLQELATERGLGIAIDVTLHSMPVFYAALPGVTPDNVNWVRRKRNMVLRYFRSSYASGLKLSKDGKTVEDNGLSGADYAPHGGSFPINVKGTGCIGAVTVSGLPQRDDHNLAVEALALMLAKDLDTLRLDPPL.

Belongs to the UPF0303 family.

The sequence is that of UPF0303 protein Rleg2_2653 from Rhizobium leguminosarum bv. trifolii (strain WSM2304).